The following is a 464-amino-acid chain: C-terminal processing peptidase, chloroplastic (464 aa).

The transit peptide at 1-32 directs the protein to the chloroplast; that stretch reads MHSRTNCLQTSVRAPQPHFRPFTAVKTCRQRC. The N-terminal 45 residues, 33–77, are a transit peptide targeting the thylakoid; it reads STTAAAAKRDQAQEQQPWIQVGLGLAAAATAVAVGLGAAALPAQA. The region spanning 149 to 234 is the PDZ domain; that stretch reads LAALRRGTAG…SQVEVVLHAP (86 aa). Residues Ser-372 and Lys-397 each act as charge relay system in the active site.

This sequence belongs to the peptidase S41A family. As to quaternary structure, monomer.

Its subcellular location is the plastid. The protein resides in the chloroplast thylakoid lumen. It catalyses the reaction The enzyme shows specific recognition of a C-terminal tripeptide, Xaa-Yaa-Zaa, in which Xaa is preferably Ala or Leu, Yaa is preferably Ala or Tyr, and Zaa is preferably Ala, but then cleaves at a variable distance from the C-terminus. A typical cleavage is -Ala-Ala-|-Arg-Ala-Ala-Lys-Glu-Asn-Tyr-Ala-Leu-Ala-Ala.. With respect to regulation, not inhibited by antipain, 4-amidinophenylmethanesulfonyl fluoride, aprotinin, chymostatin, 3,4-dichloroisocoumarin, diisopropyl fluorophosphate, E64, EDTA, EGTA, iodoacetamide, leupeptin, pepstatin, o-phenanthroline, N-ethylmaleimide, phosphoramidon or phenylmethylsulfonyl fluoride. In terms of biological role, protease involved in the C-terminal processing of the chloroplastic D1 protein of photosystem II. This proteolytic processing is necessary to allow the light-driven assembly of the tetranuclear manganese cluster, which is responsible for photosynthetic water oxidation. The polypeptide is C-terminal processing peptidase, chloroplastic (ctpA) (Tetradesmus obliquus (Green alga)).